We begin with the raw amino-acid sequence, 379 residues long: Chaperone protein DnaJ (379 aa).

Residues 5-69 (EFYDRLGVSK…QKRAAYDQYG (65 aa)) form the J domain. The segment at 135-217 (GAEKEVSYNR…CHGTGHEKKT (83 aa)) adopts a CR-type zinc-finger fold. The Zn(2+) site is built by Cys-148, Cys-151, Cys-165, Cys-168, Cys-191, Cys-194, Cys-205, and Cys-208. CXXCXGXG motif repeat units lie at residues 148–155 (CHTCSGSG), 165–172 (CQKCHGSG), 191–198 (CDVCQGSG), and 205–212 (CPTCHGTG).

This sequence belongs to the DnaJ family. As to quaternary structure, homodimer. Zn(2+) serves as cofactor.

The protein localises to the cytoplasm. In terms of biological role, participates actively in the response to hyperosmotic and heat shock by preventing the aggregation of stress-denatured proteins and by disaggregating proteins, also in an autonomous, DnaK-independent fashion. Unfolded proteins bind initially to DnaJ; upon interaction with the DnaJ-bound protein, DnaK hydrolyzes its bound ATP, resulting in the formation of a stable complex. GrpE releases ADP from DnaK; ATP binding to DnaK triggers the release of the substrate protein, thus completing the reaction cycle. Several rounds of ATP-dependent interactions between DnaJ, DnaK and GrpE are required for fully efficient folding. Also involved, together with DnaK and GrpE, in the DNA replication of plasmids through activation of initiation proteins. In Streptococcus agalactiae serotype III (strain NEM316), this protein is Chaperone protein DnaJ.